A 339-amino-acid chain; its full sequence is Putative methylthioribose-1-phosphate isomerase (339 aa).

Residues 43-45, Arg86, and Gln191 each bind substrate; that span reads RGA. Asp232 functions as the Proton donor in the catalytic mechanism. 241–242 serves as a coordination point for substrate; sequence NK.

It belongs to the eIF-2B alpha/beta/delta subunits family. MtnA subfamily.

The enzyme catalyses 5-(methylsulfanyl)-alpha-D-ribose 1-phosphate = 5-(methylsulfanyl)-D-ribulose 1-phosphate. Its function is as follows. Catalyzes the interconversion of methylthioribose-1-phosphate (MTR-1-P) into methylthioribulose-1-phosphate (MTRu-1-P). This is Putative methylthioribose-1-phosphate isomerase from Archaeoglobus fulgidus (strain ATCC 49558 / DSM 4304 / JCM 9628 / NBRC 100126 / VC-16).